Consider the following 373-residue polypeptide: Glutamate 5-kinase (373 aa).

Lysine 12 lines the ATP pocket. Residues serine 52, aspartate 139, and asparagine 154 each coordinate substrate. ATP is bound at residue threonine 216–lysine 222. Residues arginine 281–asparagine 359 form the PUA domain.

This sequence belongs to the glutamate 5-kinase family.

The protein resides in the cytoplasm. The enzyme catalyses L-glutamate + ATP = L-glutamyl 5-phosphate + ADP. It participates in amino-acid biosynthesis; L-proline biosynthesis; L-glutamate 5-semialdehyde from L-glutamate: step 1/2. Functionally, catalyzes the transfer of a phosphate group to glutamate to form L-glutamate 5-phosphate. This is Glutamate 5-kinase from Dehalococcoides mccartyi (strain CBDB1).